Here is a 322-residue protein sequence, read N- to C-terminus: N-acetyl-gamma-glutamyl-phosphate reductase (322 aa).

Cys-132 is an active-site residue.

Belongs to the NAGSA dehydrogenase family. Type 1 subfamily.

The protein resides in the cytoplasm. The enzyme catalyses N-acetyl-L-glutamate 5-semialdehyde + phosphate + NADP(+) = N-acetyl-L-glutamyl 5-phosphate + NADPH + H(+). The protein operates within amino-acid biosynthesis; L-arginine biosynthesis; N(2)-acetyl-L-ornithine from L-glutamate: step 3/4. Functionally, catalyzes the NADPH-dependent reduction of N-acetyl-5-glutamyl phosphate to yield N-acetyl-L-glutamate 5-semialdehyde. In Parabacteroides distasonis (strain ATCC 8503 / DSM 20701 / CIP 104284 / JCM 5825 / NCTC 11152), this protein is N-acetyl-gamma-glutamyl-phosphate reductase.